Reading from the N-terminus, the 118-residue chain is uncharacterized protein (118 aa).

This is an uncharacterized protein from Escherichia coli (strain K12).